The sequence spans 194 residues: dTTP/UTP pyrophosphatase (194 aa).

Residue Asp73 is the Proton acceptor of the active site.

This sequence belongs to the Maf family. YhdE subfamily. A divalent metal cation is required as a cofactor.

The protein resides in the cytoplasm. It catalyses the reaction dTTP + H2O = dTMP + diphosphate + H(+). The enzyme catalyses UTP + H2O = UMP + diphosphate + H(+). In terms of biological role, nucleoside triphosphate pyrophosphatase that hydrolyzes dTTP and UTP. May have a dual role in cell division arrest and in preventing the incorporation of modified nucleotides into cellular nucleic acids. The polypeptide is dTTP/UTP pyrophosphatase (Clostridium botulinum (strain Okra / Type B1)).